Consider the following 220-residue polypeptide: Small ribosomal subunit protein uS2 (220 aa).

Residues 201-220 are disordered; it reads LPPDGDLPEPPSEFEVKFKR.

Belongs to the universal ribosomal protein uS2 family.

The chain is Small ribosomal subunit protein uS2 from Staphylothermus marinus (strain ATCC 43588 / DSM 3639 / JCM 9404 / F1).